The following is a 34-amino-acid chain: MSDIN-like toxin proprotein 12 (34 aa).

Residues 1-10 (MSDINATRLP) constitute a propeptide that is removed on maturation. Positions 11–19 (HPFPLGLQP) form a cross-link, cyclopeptide (His-Pro). The propeptide occupies 20-34 (CAGDVDNLTLTKGEG).

The protein belongs to the MSDIN fungal toxin family. Processed by the macrocyclase-peptidase enzyme POPB to yield a toxic cyclic nonapeptide. POPB first removes 10 residues from the N-terminus. Conformational trapping of the remaining peptide forces the enzyme to release this intermediate rather than proceed to macrocyclization. The enzyme rebinds the remaining peptide in a different conformation and catalyzes macrocyclization of the N-terminal 9 residues.

Probable toxin that belongs to the MSDIN-like toxin family responsible for a large number of food poisoning cases and deaths. This Amanita bisporigera (Destroying angel) protein is MSDIN-like toxin proprotein 12.